Here is a 446-residue protein sequence, read N- to C-terminus: O-antigen polymerase (446 aa).

The next 11 membrane-spanning stretches (helical) occupy residues 11 to 31 (ICSY…VINE), 33 to 53 (FCEI…VIII), 58 to 78 (QGGF…FILI), 104 to 124 (IYVF…VLLY), 147 to 167 (QLSM…IKSY), 186 to 206 (LYDE…SLLF), 211 to 231 (NFIL…LVGL), 252 to 272 (LKIK…SLFL), 355 to 375 (IYLG…SLAF), 391 to 411 (KLAY…IYFA), and 415 to 435 (LFDF…LSIV).

It is found in the cell inner membrane. The catalysed reaction is n lipid-linked O-antigen repeat units = a lipid-linked O antigen + (n-1) polyisoprenyl diphosphate.. It functions in the pathway bacterial outer membrane biogenesis; LPS O-antigen biosynthesis. Its function is as follows. Polymerase involved in the biosynthesis of the lipopolysaccharide (LPS). Catalyzes the polymerization of the O-antigen repeat units on the periplasmic face of the inner membrane, leading to the formation of the lipid-linked O-antigen molecule. In vitro, shows a preference for bacteria-based, undecaprenyl-containing substrates rather than eukaryote-based, dolichol-containing substrates. This chain is O-antigen polymerase, found in Escherichia coli.